The chain runs to 527 residues: MSDLLSRRLALLGAAANLPLLTECLHGIERECLRVDSDGKLALTPHPRALGSTLTHPQITTDYSEALLEFITPTETDVADTLGDLERIHRFASSKLDGEYLWSPSMPCELPDEESIPIARYGSSLIGRLKYVYRKGLALRYGKTMQCIAGIHYNFSLPERLWPLLRQAEGSELSERDYQSAAYIALIRNFRRYSWLLMYLFGASPALDAGFLRGRPSQLERLDEHTLYLPYATSLRMSDLGYQNNAQAGLTPCYNDLQSYIDSLRQAVSTPYPPYEKVGTKQDGEWVQLNTNILQIENEYYSSIRPKRVTYTGERPVQALAARGVQYVEVRCLDINPFLPLGIDLDEARFLDAFLLFCAFSDSPLLNGECSDATDNFLAVVKEGRRPGLQLQRRGQPVELKVWANELLERIADTAALLDRARGGEAHAAALAAQRAKVADAELTPSAQVLKVMRERGESFEAFSLRQSREHAEYFRQHPLAAEEQARFEKMASDSLAEQTELERDQDGDFDTFVAAYQASILGLISN.

This sequence belongs to the glutamate--cysteine ligase type 1 family. Type 1 subfamily.

It carries out the reaction L-cysteine + L-glutamate + ATP = gamma-L-glutamyl-L-cysteine + ADP + phosphate + H(+). It functions in the pathway sulfur metabolism; glutathione biosynthesis; glutathione from L-cysteine and L-glutamate: step 1/2. The chain is Glutamate--cysteine ligase from Pseudomonas aeruginosa (strain UCBPP-PA14).